The primary structure comprises 548 residues: Chaperonin GroEL (548 aa).

ATP contacts are provided by residues Thr-30–Pro-33, Lys-51, Asp-87–Thr-91, Gly-415, and Asp-494.

This sequence belongs to the chaperonin (HSP60) family. Forms a cylinder of 14 subunits composed of two heptameric rings stacked back-to-back. Interacts with the co-chaperonin GroES.

Its subcellular location is the cytoplasm. The catalysed reaction is ATP + H2O + a folded polypeptide = ADP + phosphate + an unfolded polypeptide.. Its function is as follows. Together with its co-chaperonin GroES, plays an essential role in assisting protein folding. The GroEL-GroES system forms a nano-cage that allows encapsulation of the non-native substrate proteins and provides a physical environment optimized to promote and accelerate protein folding. This is Chaperonin GroEL from Oleispira antarctica.